Here is a 68-residue protein sequence, read N- to C-terminus: Urocalcin (68 aa).

A signal peptide spans 1–27 (MKASTLVVIFIVIFITISSFSIHDVQA). Positions 28-35 (SGVEKREQ) are excised as a propeptide. 3 disulfide bridges follow: Cys-38–Cys-52, Cys-45–Cys-56, and Cys-51–Cys-67. Positions 57 to 59 (KRR) are essential for stimulation of [3H]ryanodine binding to RYR1.

This sequence belongs to the scorpion calcin family. As to expression, expressed by the venom gland.

The protein resides in the secreted. In terms of biological role, this toxin only weakly stabilizes ryanodine receptor 1 (RyR1) opening in a long-lasting subconductance state (55% of the full conductance state obtained only at high concentrations (1 uM)). In addition, it has been shown to dose-dependently stimulate ryanodine binding to RyR1 with the lowest activity of all calcins (EC(50)=376 nM). It also augments the bell-shaped calcium-[3H]ryanodine binding curve that is maximal at about 10 uM calcium concentration. It binds a different site as ryanodine. It acts synergistically with caffeine. In contrast to other calcins, it does not trigger calcium release from sarcoplasmic vesicles even at high concentration (1 uM). In vivo, intracerebroventricular injection into mice induces neurotoxic symptoms, followed by death. The protein is Urocalcin of Urodacus yaschenkoi (Inland robust scorpion).